Here is a 553-residue protein sequence, read N- to C-terminus: Protein Early 65 kDa (553 aa).

It localises to the host cytoplasm. Its function is as follows. May participate in the recruitment of G-actin to the host nucleus. The sequence is that of Protein Early 65 kDa (HE65) from Autographa californica nuclear polyhedrosis virus (AcMNPV).